The primary structure comprises 298 residues: tRNA-cytidine(32) 2-sulfurtransferase (298 aa).

Residues 48–53 (SGGKDS) carry the PP-loop motif motif. 3 residues coordinate [4Fe-4S] cluster: Cys123, Cys126, and Cys214.

It belongs to the TtcA family. As to quaternary structure, homodimer. It depends on Mg(2+) as a cofactor. The cofactor is [4Fe-4S] cluster.

It localises to the cytoplasm. It carries out the reaction cytidine(32) in tRNA + S-sulfanyl-L-cysteinyl-[cysteine desulfurase] + AH2 + ATP = 2-thiocytidine(32) in tRNA + L-cysteinyl-[cysteine desulfurase] + A + AMP + diphosphate + H(+). Its pathway is tRNA modification. Its function is as follows. Catalyzes the ATP-dependent 2-thiolation of cytidine in position 32 of tRNA, to form 2-thiocytidine (s(2)C32). The sulfur atoms are provided by the cysteine/cysteine desulfurase (IscS) system. This chain is tRNA-cytidine(32) 2-sulfurtransferase, found in Nitrosospira multiformis (strain ATCC 25196 / NCIMB 11849 / C 71).